The sequence spans 504 residues: Catalase (504 aa).

The N-terminal stretch at 1–21 is a signal peptide; sequence MQMSKSFLLITVGLASTSLQA. Catalysis depends on residues His72 and Asn145. Tyr353 provides a ligand contact to heme.

The protein belongs to the catalase family. It depends on heme as a cofactor.

The protein resides in the periplasm. The enzyme catalyses 2 H2O2 = O2 + 2 H2O. Decomposes hydrogen peroxide into water and oxygen; serves to protect cells from the toxic effects of hydrogen peroxide. This is Catalase from Vibrio parahaemolyticus serotype O3:K6 (strain RIMD 2210633).